A 166-amino-acid chain; its full sequence is MKVILKEDFTNLGREGDTVEVKDGFARNYLLPKGFAVFSNKHNVEIFNQKKRSILKKQETKKQIANDLKSKLDLVKLEFFMKSNDSGKLFHSINSLNIAEELLKLGFDIERKKIDIHHGTLKAFGTYDVTVKLYEGISAIIKVEIKKEKKQEDKKSLNKKLNKVDE.

Belongs to the bacterial ribosomal protein bL9 family.

Its function is as follows. Binds to the 23S rRNA. The chain is Large ribosomal subunit protein bL9 from Borrelia garinii subsp. bavariensis (strain ATCC BAA-2496 / DSM 23469 / PBi) (Borreliella bavariensis).